A 1167-amino-acid polypeptide reads, in one-letter code: DNA-directed RNA polymerase subunit beta (1167 aa).

It belongs to the RNA polymerase beta chain family. As to quaternary structure, the RNAP catalytic core consists of 2 alpha, 1 beta, 1 beta' and 1 omega subunit. When a sigma factor is associated with the core the holoenzyme is formed, which can initiate transcription.

It catalyses the reaction RNA(n) + a ribonucleoside 5'-triphosphate = RNA(n+1) + diphosphate. Functionally, DNA-dependent RNA polymerase catalyzes the transcription of DNA into RNA using the four ribonucleoside triphosphates as substrates. The protein is DNA-directed RNA polymerase subunit beta of Treponema denticola (strain ATCC 35405 / DSM 14222 / CIP 103919 / JCM 8153 / KCTC 15104).